Reading from the N-terminus, the 556-residue chain is MASDIEIARGAKKKPIQEVAARAGVSPENLIPYGHDKAKISAAHLAGLAHNATGKLILVTAINPTPAGEGKTTTSIGLADAMNRIGANTLLCLREPSLGPCFGMKGGATGGGLAQIVPMEDINLHFTGDFHAITSAHNLLSTMIDNHIHWGGEPKLEAVRTSWRRVMDMNDRSLRNIVSGLGGPGNGSPSETGFDITVASEVMAILCLATDAEDLEARLARIIVGYTSEKEAVTAADIKATGAMMALLRDAMLPNLVQTLENNPCLVHGGPFANIAHGCNSVMATSAALKMADYVVTEAGFGADLGAEKFLNIKCRQAGLAPDAVVLVATIRALKMHGGLGKNDLGKVSYEALESGLENLGRHIGNLRSFGLPVIVAINRFTTDTEGEVHALQAYCEKLGVPVSLCTHWAEGGKGTEDLARGVTALIEKGEADFKPLYPDDMPLLEKIETVAKSIYRAGRVETTRAVRNQLAAWEKAGFGHLPVCMAKTQYSFSTDPALLGAPEGHVVRLREVRLAAGAGFVVAICGDIMTMPGLPRRPAAEHIHLNRQGQIEGLN.

65–72 (TPAGEGKT) serves as a coordination point for ATP.

This sequence belongs to the formate--tetrahydrofolate ligase family.

It catalyses the reaction (6S)-5,6,7,8-tetrahydrofolate + formate + ATP = (6R)-10-formyltetrahydrofolate + ADP + phosphate. It functions in the pathway one-carbon metabolism; tetrahydrofolate interconversion. The chain is Formate--tetrahydrofolate ligase from Hyphomonas neptunium (strain ATCC 15444).